A 248-amino-acid polypeptide reads, in one-letter code: Isoprenyl transferase (248 aa).

D23 is an active-site residue. Position 23 (D23) interacts with Mg(2+). Residues 24–27 (GNGR), W28, R36, H40, and 68–70 (STE) each bind substrate. N71 acts as the Proton acceptor in catalysis. Substrate is bound by residues W72, R74, R185, and 191 to 193 (RIS). E204 contacts Mg(2+).

It belongs to the UPP synthase family. As to quaternary structure, homodimer. Mg(2+) serves as cofactor.

Its function is as follows. Catalyzes the condensation of isopentenyl diphosphate (IPP) with allylic pyrophosphates generating different type of terpenoids. The sequence is that of Isoprenyl transferase from Neisseria meningitidis serogroup B (strain ATCC BAA-335 / MC58).